The following is a 642-amino-acid chain: MGQLSSLTSVWMVVVVTSWVIIAANIDTVEARSCSECHSNATCMEDGMVTTCSCLVGFTGSGFECVDLDECAIPGAHNCSEGSSCMNTLGSYLCTCPDGFRLTPGLGCIDVDECSEPGLSRCHALATCINNKGNYSCVCPAGYRGDGQHCECSPGSCGPGLDCVPVGDALVCADPCQEHRILDEYWRSTEYGAGYTCDVGLNGWYRFTGPGGVRLAETCVPVLHCNTAAPMWLNGTHPTRDQGIVNRTACAHWRGHCCLWDASIQVKACAGGYYVYNLTETPECYLAYCTDPTSVLGTCEECSVEEDCKSHDGMWSCQCKQDFNVTDLFLLDRLECRPNDIKVSLSKCQLKSLGFEKVFMYLRDSQCSGFNERGDRDWVSVVTPARDGPCGTVMVRNETHATYSNTLYLADEIVIRDRNIKINFECSYPLDMKVSLETSLQPIVSSLNISVGGTGMFTVRMALFQTPDYTQPYQGSSVTLTTEAFLYVGTMLDGGDLSRFALLMTNCYATPSSNATDPLKYFIIQDRCPRTTDSTIQVVENGESPQGRFSVQMFRFAGNYDLVYLHCEVYLCDIINEKCKPTCSGTRFRSGGIIDQSRVLNLGPITRKNVQAVVSRAASSSLGFLKVCLPLLLSATLTLMFQ.

An N-terminal signal peptide occupies residues 1–26 (MGQLSSLTSVWMVVVVTSWVIIAANI). In terms of domain architecture, EGF-like 1 spans 32–64 (RSCSECHSNATCMEDGMVTTCSCLVGFTGSGFE). Cystine bridges form between C34–C43, C37–C52, C54–C65, C71–C85, C79–C94, C96–C108, C114–C128, C122–C137, C139–C150, C152–C163, C157–C172, C176–C269, C197–C284, C219–C257, C225–C289, C250–C258, C299–C308, C302–C317, C319–C348, C336–C426, and C367–C390. N40 carries N-linked (GlcNAc...) asparagine glycosylation. The EGF-like 2; calcium-binding domain maps to 67–109 (DLDECAIPGAHNCSEGSSCMNTLGSYLCTCPDGFRLTPGLGCI). The N-linked (GlcNAc...) asparagine glycan is linked to N78. An EGF-like 3; calcium-binding domain is found at 110 to 151 (DVDECSEPGLSRCHALATCINNKGNYSCVCPAGYRGDGQHCE). The N-linked (GlcNAc...) asparagine glycan is linked to N134. The beta hairpin stretch occupies residues 152–173 (CSPGSCGPGLDCVPVGDALVCA). The segment at 174-293 (DPCQEHRILD…CYLAYCTDPT (120 aa)) is D10C. N234 and N246 each carry an N-linked (GlcNAc...) asparagine glycan. N-linked (GlcNAc...) asparagine glycosylation is present at N277. Residues 294–325 (SVLGTCEECSVEEDCKSHDGMWSCQCKQDFNV) form the EGF-like 4 domain. N324 carries N-linked (GlcNAc...) asparagine glycosylation. Residues 335–430 (ECRPNDIKVS…KINFECSYPL (96 aa)) form a ZP-N region. A ZP domain is found at 335–590 (ECRPNDIKVS…PTCSGTRFRS (256 aa)). N-linked (GlcNAc...) asparagine glycans are attached at residues N397 and N448. A flexible ZP-N/ZP-C linker; important for secretion and polymerization into filaments region spans residues 431–454 (DMKVSLETSLQPIVSSLNISVGGT). The internal hydrophobic patch (IHP) stretch occupies residues 455–465 (GMFTVRMALFQ). The interval 455-590 (GMFTVRMALF…PTCSGTRFRS (136 aa)) is ZP-C. 3 disulfides stabilise this stretch: C507/C567, C528/C583, and C572/C579. N514 carries N-linked (GlcNAc...) asparagine glycosylation. The segment at 587-590 (RFRS) is essential for cleavage by HPN. The external hydrophobic patch (EHP); regulates polymerization into filaments stretch occupies residues 599 to 607 (VLNLGPITR). The GPI-anchor amidated serine moiety is linked to residue S620. The propeptide at 621 to 642 (SLGFLKVCLPLLLSATLTLMFQ) is removed in mature form.

As to quaternary structure, homodimer that then polymerizes into long filaments. The filaments can additionally assemble laterally to form a sheet. The filaments consist of a zigzag-shaped backbone with laterally protruding arms which interact with bacterial adhesin fimH. Two fimH molecules can bind to a single UMOD monomer. In terms of processing, N-glycosylated. Proteolytically cleaved at a conserved C-terminal proteolytic cleavage site to generate the secreted form found in urine. This cleavage is catalyzed by HPN. In terms of tissue distribution, detected in kidney and pancreas.

It localises to the apical cell membrane. It is found in the basolateral cell membrane. The protein resides in the cell projection. The protein localises to the cilium membrane. Its subcellular location is the secreted. In terms of biological role, functions in biogenesis and organization of the apical membrane of epithelial cells of the thick ascending limb of Henle's loop (TALH), where it promotes formation of complex filamentous gel-like structure that may play a role in the water barrier permeability. May serve as a receptor for binding and endocytosis of cytokines (IL-1, IL-2) and TNF. Facilitates neutrophil migration across renal epithelia. Its function is as follows. In the urine, may contribute to colloid osmotic pressure, retards passage of positively charged electrolytes, and inhibits formation of liquid containing supersaturated salts and subsequent formation of salt crystals. Protects against urinary tract infections by binding to type 1 fimbriated E.coli. Binds to bacterial adhesin fimH which mediates the stable formation of bacterial aggregates, prevents the binding of E.coli to uroplakins UPK1A and UPK1B which act as urothelial receptors for type I fimbriae, and allows for pathogen clearance through micturation. Also promotes aggregation of other bacteria including K.pneumoniae, P.aeruginosa and S.mitis and so may also protect against other uropathogens. This is Uromodulin (UMOD) from Canis lupus familiaris (Dog).